A 310-amino-acid chain; its full sequence is tRNA pseudouridine synthase B (310 aa).

Asp-47 functions as the Nucleophile in the catalytic mechanism.

Belongs to the pseudouridine synthase TruB family. Type 1 subfamily.

The enzyme catalyses uridine(55) in tRNA = pseudouridine(55) in tRNA. In terms of biological role, responsible for synthesis of pseudouridine from uracil-55 in the psi GC loop of transfer RNAs. The chain is tRNA pseudouridine synthase B from Caulobacter vibrioides (strain ATCC 19089 / CIP 103742 / CB 15) (Caulobacter crescentus).